Reading from the N-terminus, the 259-residue chain is MNDILKIGKYELNSRLIVGSGKYKDFQTTKEATLASGSELITVAIRRVNITNPNEENLLDYFKDTNVKFLPNSAGCFTAEEAITTFRLMREATGIDLIKLEVIGDAQKTLYPDVIETIKACEILKKDGFTIMAYTSDDPIIAKRLEDAGADAIMPLAAPIGSGLGIQNKYNIAFIRDAVKVPVIVDAGIGCASDASIAMELGADAVLANSAIACAQNPIQMAEAMKYAVIAGRLGYKAGRIPKKPYATASSPIDGLIQF.

Lys-99 functions as the Schiff-base intermediate with DXP in the catalytic mechanism. 1-deoxy-D-xylulose 5-phosphate contacts are provided by residues Gly-161, 187 to 188 (AG), and 209 to 219 (NSAIACAQNPI).

It belongs to the ThiG family. Homotetramer. Forms heterodimers with either ThiH or ThiS.

It localises to the cytoplasm. The enzyme catalyses [ThiS sulfur-carrier protein]-C-terminal-Gly-aminoethanethioate + 2-iminoacetate + 1-deoxy-D-xylulose 5-phosphate = [ThiS sulfur-carrier protein]-C-terminal Gly-Gly + 2-[(2R,5Z)-2-carboxy-4-methylthiazol-5(2H)-ylidene]ethyl phosphate + 2 H2O + H(+). Its pathway is cofactor biosynthesis; thiamine diphosphate biosynthesis. Functionally, catalyzes the rearrangement of 1-deoxy-D-xylulose 5-phosphate (DXP) to produce the thiazole phosphate moiety of thiamine. Sulfur is provided by the thiocarboxylate moiety of the carrier protein ThiS. In vitro, sulfur can be provided by H(2)S. In Aliarcobacter butzleri (strain RM4018) (Arcobacter butzleri), this protein is Thiazole synthase.